A 122-amino-acid polypeptide reads, in one-letter code: UPF0102 protein CKL_1410 (122 aa).

The protein belongs to the UPF0102 family.

This Clostridium kluyveri (strain ATCC 8527 / DSM 555 / NBRC 12016 / NCIMB 10680 / K1) protein is UPF0102 protein CKL_1410.